Here is a 127-residue protein sequence, read N- to C-terminus: Large ribosomal subunit protein bL17 (127 aa).

Belongs to the bacterial ribosomal protein bL17 family. In terms of assembly, part of the 50S ribosomal subunit. Contacts protein L32.

This Lactobacillus helveticus (strain DPC 4571) protein is Large ribosomal subunit protein bL17.